A 164-amino-acid chain; its full sequence is Serine/arginine-rich splicing factor 3 (164 aa).

Met-1 is subject to N-acetylmethionine. Residues 1–90 (MHRDSCPLDC…SNGEKRSRNR (90 aa)) are sufficient for interaction with NXF1 and SRSP. Ser-5 bears the Phosphoserine mark. An RRM domain is found at 10 to 83 (CKVYVGNLGN…CRVRVELSNG (74 aa)). Lys-23 carries the post-translational modification N6-acetyllysine. The disordered stretch occupies residues 81–164 (SNGEKRSRNR…RSRSRSNERK (84 aa)). Residues 107–128 (RSPPPRRRSPRRRSFSRSRSRS) show a composition bias toward basic residues. The B-1 repeat unit spans residues 119-133 (RSFSRSRSRSLSRDR). Positions 119-164 (RSFSRSRSRSLSRDRRRERSLSRERNHKPSRSFSRSRSRSRSNERK) are 2 X approximate repeats, basic. Residues 129–142 (LSRDRRRERSLSRE) are compositionally biased toward basic and acidic residues. Residues 143 to 158 (RNHKPSRSFSRSRSRS) show a composition bias toward basic residues. A B-2 repeat occupies 149–164 (RSFSRSRSRSRSNERK).

Belongs to the splicing factor SR family. As to quaternary structure, interacts with CPSF6. Interacts with RBMY1A1. Interacts with SREK1/SFRS12. Interacts with NXF1. Interacts with YTHDC1, leading to recruitment to RNA elements adjacent to m6A sites. Interacts with SRSP; increases SRSF3 binding to specific exons. Phosphorylated by CLK1, CLK2, CLK3 and CLK4. Extensively phosphorylated on serine residues in the RS domain.

It localises to the nucleus. Its subcellular location is the nucleus speckle. The protein localises to the cytoplasm. In terms of biological role, splicing factor, which binds the consensus motif 5'-C[ACU][AU]C[ACU][AC]C-3' within pre-mRNA and promotes specific exons inclusion during alternative splicing. Interaction with YTHDC1, a RNA-binding protein that recognizes and binds N6-methyladenosine (m6A)-containing RNAs, promotes recruitment of SRSF3 to its mRNA-binding elements adjacent to m6A sites within exons. Also functions as an adapter involved in mRNA nuclear export. Binds mRNA which is thought to be transferred to the NXF1-NXT1 heterodimer for export (TAP/NXF1 pathway); enhances NXF1-NXT1 RNA-binding activity. Involved in nuclear export of m6A-containing mRNAs via interaction with YTHDC1: interaction with YTHDC1 facilitates m6A-containing mRNA-binding to both SRSF3 and NXF1, promoting mRNA nuclear export. The chain is Serine/arginine-rich splicing factor 3 (SRSF3) from Bos taurus (Bovine).